We begin with the raw amino-acid sequence, 457 residues long: tRNA modification GTPase MnmE (457 aa).

Positions 22, 85, and 124 each coordinate (6S)-5-formyl-5,6,7,8-tetrahydrofolate. Positions 219–378 constitute a TrmE-type G domain; the sequence is GATVVIAGKP…LKEKIYDLVL (160 aa). Asn-229 is a K(+) binding site. GTP contacts are provided by residues 229–234, 248–254, 273–276, and 333–336; these read NTGKSS, TPVPGTT, DTAG, and NKAD. A Mg(2+)-binding site is contributed by Ser-233. The K(+) site is built by Thr-248, Val-250, and Thr-253. Position 254 (Thr-254) interacts with Mg(2+). (6S)-5-formyl-5,6,7,8-tetrahydrofolate is bound at residue Lys-457.

The protein belongs to the TRAFAC class TrmE-Era-EngA-EngB-Septin-like GTPase superfamily. TrmE GTPase family. As to quaternary structure, homodimer. Heterotetramer of two MnmE and two MnmG subunits. It depends on K(+) as a cofactor.

The protein resides in the cytoplasm. Exhibits a very high intrinsic GTPase hydrolysis rate. Involved in the addition of a carboxymethylaminomethyl (cmnm) group at the wobble position (U34) of certain tRNAs, forming tRNA-cmnm(5)s(2)U34. In Syntrophus aciditrophicus (strain SB), this protein is tRNA modification GTPase MnmE.